A 182-amino-acid polypeptide reads, in one-letter code: Inosine/xanthosine triphosphatase (182 aa).

It belongs to the YjjX NTPase family. Homodimer. Mg(2+) serves as cofactor. The cofactor is Mn(2+).

It carries out the reaction XTP + H2O = XDP + phosphate + H(+). The catalysed reaction is ITP + H2O = IDP + phosphate + H(+). Phosphatase that hydrolyzes non-canonical purine nucleotides such as XTP and ITP to their respective diphosphate derivatives. Probably excludes non-canonical purines from DNA/RNA precursor pool, thus preventing their incorporation into DNA/RNA and avoiding chromosomal lesions. This chain is Inosine/xanthosine triphosphatase, found in Vibrio parahaemolyticus serotype O3:K6 (strain RIMD 2210633).